The chain runs to 433 residues: Enolase (433 aa).

Glutamine 167 is a (2R)-2-phosphoglycerate binding site. Glutamate 209 functions as the Proton donor in the catalytic mechanism. Mg(2+) is bound by residues aspartate 246, glutamate 291, and aspartate 318. 4 residues coordinate (2R)-2-phosphoglycerate: lysine 343, arginine 372, serine 373, and lysine 394. Lysine 343 acts as the Proton acceptor in catalysis.

Belongs to the enolase family. Component of the RNA degradosome, a multiprotein complex involved in RNA processing and mRNA degradation. Mg(2+) is required as a cofactor.

The protein resides in the cytoplasm. It is found in the secreted. It localises to the cell surface. It catalyses the reaction (2R)-2-phosphoglycerate = phosphoenolpyruvate + H2O. It functions in the pathway carbohydrate degradation; glycolysis; pyruvate from D-glyceraldehyde 3-phosphate: step 4/5. Catalyzes the reversible conversion of 2-phosphoglycerate (2-PG) into phosphoenolpyruvate (PEP). It is essential for the degradation of carbohydrates via glycolysis. This is Enolase from Tolumonas auensis (strain DSM 9187 / NBRC 110442 / TA 4).